Consider the following 114-residue polypeptide: Large ribosomal subunit protein bL17 (114 aa).

The protein belongs to the bacterial ribosomal protein bL17 family. Part of the 50S ribosomal subunit. Contacts protein L32.

The protein is Large ribosomal subunit protein bL17 of Elusimicrobium minutum (strain Pei191).